The primary structure comprises 700 residues: DNA ligase (700 aa).

NAD(+)-binding positions include 61–65 (DAEYD), 110–111 (SL), and glutamate 141. Lysine 143 acts as the N6-AMP-lysine intermediate in catalysis. The NAD(+) site is built by arginine 164, glutamate 202, lysine 321, and lysine 345. Residues cysteine 439, cysteine 442, cysteine 457, and cysteine 462 each coordinate Zn(2+). The BRCT domain maps to 619–700 (AVSNKLAGLQ…EFLRLLEDSK (82 aa)).

Belongs to the NAD-dependent DNA ligase family. LigA subfamily. Mg(2+) serves as cofactor. It depends on Mn(2+) as a cofactor.

It carries out the reaction NAD(+) + (deoxyribonucleotide)n-3'-hydroxyl + 5'-phospho-(deoxyribonucleotide)m = (deoxyribonucleotide)n+m + AMP + beta-nicotinamide D-nucleotide.. DNA ligase that catalyzes the formation of phosphodiester linkages between 5'-phosphoryl and 3'-hydroxyl groups in double-stranded DNA using NAD as a coenzyme and as the energy source for the reaction. It is essential for DNA replication and repair of damaged DNA. The sequence is that of DNA ligase from Hydrogenobaculum sp. (strain Y04AAS1).